The chain runs to 663 residues: DNA ligase (663 aa).

NAD(+)-binding positions include 33–37 (DYSYD), 82–83 (SI), and Glu112. Lys114 functions as the N6-AMP-lysine intermediate in the catalytic mechanism. The NAD(+) site is built by Arg135, Glu171, Lys285, and Lys309. Zn(2+) is bound by residues Cys403, Cys406, Cys419, and Cys424. One can recognise a BRCT domain in the interval 581–663 (DKEAPLQGKV…LRILDAKSVS (83 aa)).

It belongs to the NAD-dependent DNA ligase family. LigA subfamily. Mg(2+) serves as cofactor. It depends on Mn(2+) as a cofactor.

The enzyme catalyses NAD(+) + (deoxyribonucleotide)n-3'-hydroxyl + 5'-phospho-(deoxyribonucleotide)m = (deoxyribonucleotide)n+m + AMP + beta-nicotinamide D-nucleotide.. DNA ligase that catalyzes the formation of phosphodiester linkages between 5'-phosphoryl and 3'-hydroxyl groups in double-stranded DNA using NAD as a coenzyme and as the energy source for the reaction. It is essential for DNA replication and repair of damaged DNA. The sequence is that of DNA ligase from Chlamydia trachomatis serovar A (strain ATCC VR-571B / DSM 19440 / HAR-13).